Here is a 408-residue protein sequence, read N- to C-terminus: Chaperonin GroEL (408 aa).

ATP is bound by residues 30–33 (TLGP), Lys-51, and 87–91 (DGTTT).

Belongs to the chaperonin (HSP60) family. In terms of assembly, forms a cylinder of 14 subunits composed of two heptameric rings stacked back-to-back. Interacts with the co-chaperonin GroES.

The protein resides in the cytoplasm. The enzyme catalyses ATP + H2O + a folded polypeptide = ADP + phosphate + an unfolded polypeptide.. Functionally, together with its co-chaperonin GroES, plays an essential role in assisting protein folding. The GroEL-GroES system forms a nano-cage that allows encapsulation of the non-native substrate proteins and provides a physical environment optimized to promote and accelerate protein folding. This chain is Chaperonin GroEL, found in Rickettsia rickettsii.